A 188-amino-acid polypeptide reads, in one-letter code: Succinate dehydrogenase [ubiquinone] cytochrome b large subunit, mitochondrial (188 aa).

Residues 1-31 constitute a mitochondrion transit peptide; that stretch reads MSLLPYNATLCRVLRHNVKFIRSVQTSAARV. The Mitochondrial matrix portion of the chain corresponds to 32 to 69; that stretch reads SAEKTPIQVWGWDYLMRQRALKRPIAPHLTIYKPQMTW. Residues 70–95 form a helical membrane-spanning segment; that stretch reads MVSGLHRVTGCAMAGTLLIGGVGFSV. Serine 72 and arginine 76 together coordinate a rhodoquinol. The a ubiquinone site is built by serine 72 and arginine 76. Topologically, residues 96 to 113 are mitochondrial intermembrane; the sequence is LPLDFTTFVEFIRGLGIP. The helical transmembrane segment at 114 to 140 threads the bilayer; it reads WVILDTFKFIIAFPIAFHTLNGIRFIG. Histidine 131 is a binding site for heme b. Over 141–153 the chain is Mitochondrial matrix; the sequence is FDMAKGTDIPSIY. Residues 154-176 traverse the membrane as a helical segment; sequence RGAYLVLGLAALISLAVVVYPRW. Residues 177–188 are Mitochondrial intermembrane-facing; that stretch reads ERHKKATLPTNH.

The protein belongs to the cytochrome b558 family. In terms of assembly, component of the mitochondrial electron transport chain complex II composed of four subunits: a flavoprotein (Fp), an iron-sulfur protein (Ip), and a large cytochrome b (CybL) subunit and a small cytochrome b (CybS) subunit. There are 2 developmental stage-specific forms of complex II which have the Ip and CybL subunits in common. Complex II from the free-living larvae (aerobic environment) acts as a succinate dehydrogenase and is composed of the common subunit Ip and CybL and the stage specific subunits FpL and CybSL. Complex II from parasitic larvae and adults (anaerobic environment) acts as a fumarate reductase and is composed of the common subunit Ip and CybL and the stage specific subunits FpA and CybSA. Requires heme b as cofactor. Expressed in adult muscles (at protein level).

It is found in the mitochondrion inner membrane. The protein operates within carbohydrate metabolism; tricarboxylic acid cycle; fumarate from succinate (eukaryal route): step 1/1. In terms of biological role, membrane-bound large subunit (CybL) of the mitochondrial electron transport chain complex II, which together with the membrane-bound small subunit (CybS), anchor the catalytic subunits to the inner mitochondria membrane. During the free-living egg-larvae stages, which occur in an aerobic environment, complex II acts as a succinate dehydrogenase by transferring electrons from succinate to ubiquinone. During the parasitic larvae and adult stages, which occur in an anaerobic environment, complex II acts as a fumarate reductase by transferring electrons from rhodoquinol to fumarate. The protein is Succinate dehydrogenase [ubiquinone] cytochrome b large subunit, mitochondrial of Ascaris suum (Pig roundworm).